A 796-amino-acid polypeptide reads, in one-letter code: Disintegrin and metalloproteinase domain-containing protein B (796 aa).

The N-terminal stretch at 1-23 (MKALSCLLAVIATAGSLFQHVDA) is a signal peptide. The Extracellular segment spans residues 24–706 (RSHARDRLNN…VSDWVSRHKP (683 aa)). Residues Asn-33, Asn-226, Asn-313, and Asn-407 are each glycosylated (N-linked (GlcNAc...) asparagine). Positions 271 to 510 (RVALIGVVAD…HSILTNCLTT (240 aa)) constitute a Peptidase M12B domain. Disulfide bonds link Cys-395/Cys-495, Cys-448/Cys-459, and Cys-580/Cys-600. His-431 is a binding site for Zn(2+). Glu-432 is an active-site residue. The Zn(2+) site is built by His-435 and His-441. Residues 519–608 (GQQCGNGIVE…DCPRDTHSKN (90 aa)) form the Disintegrin domain. A helical transmembrane segment spans residues 707-727 (IVIGVAVGVGCLLLLAILSCI). The Cytoplasmic portion of the chain corresponds to 728 to 796 (CGRSKKRRPR…PGRMPSTRYA (69 aa)). The tract at residues 737-796 (RNRKMAPINMRPMPPVYNGWTGPPPNAESPGGHPQYNHVPPPINAPPPAYPGRMPSTRYA) is disordered. Over residues 775–786 (VPPPINAPPPAY) the composition is skewed to pro residues.

Requires Zn(2+) as cofactor.

It is found in the membrane. Its function is as follows. Probable zinc protease. In Arthroderma otae (strain ATCC MYA-4605 / CBS 113480) (Microsporum canis), this protein is Disintegrin and metalloproteinase domain-containing protein B (ADM-B).